The following is a 245-amino-acid chain: 2,3-bisphosphoglycerate-dependent phosphoglycerate mutase (245 aa).

Substrate is bound by residues 8–15 (RHGQSLWN), 21–22 (TG), arginine 60, 87–90 (ERHY), lysine 98, 114–115 (RR), and 183–184 (GN). Histidine 9 acts as the Tele-phosphohistidine intermediate in catalysis. Catalysis depends on glutamate 87, which acts as the Proton donor/acceptor.

Belongs to the phosphoglycerate mutase family. BPG-dependent PGAM subfamily.

The enzyme catalyses (2R)-2-phosphoglycerate = (2R)-3-phosphoglycerate. It functions in the pathway carbohydrate degradation; glycolysis; pyruvate from D-glyceraldehyde 3-phosphate: step 3/5. Its function is as follows. Catalyzes the interconversion of 2-phosphoglycerate and 3-phosphoglycerate. This is 2,3-bisphosphoglycerate-dependent phosphoglycerate mutase from Bacillus cereus (strain G9842).